Here is a 299-residue protein sequence, read N- to C-terminus: ATP phosphoribosyltransferase (299 aa).

Belongs to the ATP phosphoribosyltransferase family. Long subfamily. Equilibrium between an active dimeric form, an inactive hexameric form and higher aggregates. Interconversion between the various forms is largely reversible and is influenced by the natural substrates and inhibitors of the enzyme. Mg(2+) serves as cofactor.

It is found in the cytoplasm. The catalysed reaction is 1-(5-phospho-beta-D-ribosyl)-ATP + diphosphate = 5-phospho-alpha-D-ribose 1-diphosphate + ATP. It functions in the pathway amino-acid biosynthesis; L-histidine biosynthesis; L-histidine from 5-phospho-alpha-D-ribose 1-diphosphate: step 1/9. With respect to regulation, feedback inhibited by histidine. Catalyzes the condensation of ATP and 5-phosphoribose 1-diphosphate to form N'-(5'-phosphoribosyl)-ATP (PR-ATP). Has a crucial role in the pathway because the rate of histidine biosynthesis seems to be controlled primarily by regulation of HisG enzymatic activity. This Salmonella choleraesuis (strain SC-B67) protein is ATP phosphoribosyltransferase.